We begin with the raw amino-acid sequence, 150 residues long: Large ribosomal subunit protein uL13 (150 aa).

It belongs to the universal ribosomal protein uL13 family. Part of the 50S ribosomal subunit.

Functionally, this protein is one of the early assembly proteins of the 50S ribosomal subunit, although it is not seen to bind rRNA by itself. It is important during the early stages of 50S assembly. The polypeptide is Large ribosomal subunit protein uL13 (Sulfurihydrogenibium sp. (strain YO3AOP1)).